The sequence spans 72 residues: DNA-directed RNA polymerase subunit epsilon (72 aa).

This sequence belongs to the RNA polymerase subunit epsilon family. In terms of assembly, RNAP is composed of a core of 2 alpha, a beta and a beta' subunit. The core is associated with a delta subunit, and at least one of epsilon or omega. When a sigma factor is associated with the core the holoenzyme is formed, which can initiate transcription.

It catalyses the reaction RNA(n) + a ribonucleoside 5'-triphosphate = RNA(n+1) + diphosphate. In terms of biological role, a non-essential component of RNA polymerase (RNAP). The sequence is that of DNA-directed RNA polymerase subunit epsilon from Staphylococcus haemolyticus (strain JCSC1435).